Here is a 556-residue protein sequence, read N- to C-terminus: Phosphomethylpyrimidine synthase (556 aa).

Substrate contacts are provided by residues Asn191, Met220, Tyr249, His285, 305–307, 346–349, and Glu385; these read SRG and DALR. Residue His389 participates in Zn(2+) binding. Tyr412 provides a ligand contact to substrate. Residue His453 coordinates Zn(2+). [4Fe-4S] cluster is bound by residues Cys535, Cys538, and Cys543.

Belongs to the ThiC family. Requires [4Fe-4S] cluster as cofactor.

The catalysed reaction is 5-amino-1-(5-phospho-beta-D-ribosyl)imidazole + S-adenosyl-L-methionine = 4-amino-2-methyl-5-(phosphooxymethyl)pyrimidine + CO + 5'-deoxyadenosine + formate + L-methionine + 3 H(+). It functions in the pathway cofactor biosynthesis; thiamine diphosphate biosynthesis. Its function is as follows. Catalyzes the synthesis of the hydroxymethylpyrimidine phosphate (HMP-P) moiety of thiamine from aminoimidazole ribotide (AIR) in a radical S-adenosyl-L-methionine (SAM)-dependent reaction. The polypeptide is Phosphomethylpyrimidine synthase (Chlorobaculum tepidum (strain ATCC 49652 / DSM 12025 / NBRC 103806 / TLS) (Chlorobium tepidum)).